Consider the following 678-residue polypeptide: DNA ligase (678 aa).

Residues 47–51, 96–97, and glutamate 122 contribute to the NAD(+) site; these read DSDYD and SL. Catalysis depends on lysine 124, which acts as the N6-AMP-lysine intermediate. NAD(+)-binding residues include arginine 145, glutamate 182, lysine 300, and lysine 324. Residues cysteine 418, cysteine 421, cysteine 436, and cysteine 442 each contribute to the Zn(2+) site. The region spanning 602–678 is the BRCT domain; it reads AYNESFTGKT…ILEDNLKDLL (77 aa).

This sequence belongs to the NAD-dependent DNA ligase family. LigA subfamily. Mg(2+) serves as cofactor. Requires Mn(2+) as cofactor.

The catalysed reaction is NAD(+) + (deoxyribonucleotide)n-3'-hydroxyl + 5'-phospho-(deoxyribonucleotide)m = (deoxyribonucleotide)n+m + AMP + beta-nicotinamide D-nucleotide.. DNA ligase that catalyzes the formation of phosphodiester linkages between 5'-phosphoryl and 3'-hydroxyl groups in double-stranded DNA using NAD as a coenzyme and as the energy source for the reaction. It is essential for DNA replication and repair of damaged DNA. The chain is DNA ligase from Francisella tularensis subsp. holarctica (strain FTNF002-00 / FTA).